Reading from the N-terminus, the 72-residue chain is uncharacterized protein (72 aa).

The stretch at 27–55 (YTQNLINELQEARDSINDLQRAHERLKLV) forms a coiled coil.

This is an uncharacterized protein from Schizosaccharomyces pombe (strain 972 / ATCC 24843) (Fission yeast).